Reading from the N-terminus, the 60-residue chain is Small ribosomal subunit protein bS21 (60 aa).

Positions 38 to 60 (KGVKRREKEKAARKRLQKKHRMY) are disordered.

It belongs to the bacterial ribosomal protein bS21 family.

The polypeptide is Small ribosomal subunit protein bS21 (Mycoplasmoides gallisepticum (strain R(low / passage 15 / clone 2)) (Mycoplasma gallisepticum)).